The following is a 294-amino-acid chain: Nucleoside-specific channel-forming protein Tsx (294 aa).

Residues 1-22 (MKKTLLAAGAVVALSTTFAAGA) form the signal peptide.

It belongs to the nucleoside-specific channel-forming outer membrane porin (Tsx) (TC 1.B.10) family.

The protein localises to the cell outer membrane. In terms of biological role, functions as a substrate-specific channel for nucleosides and deoxynucleosides. Also functions in albicidin uptake and as receptor for colicin K. Also is a receptor for several Tsx-specific bacteriophages. The chain is Nucleoside-specific channel-forming protein Tsx from Klebsiella pneumoniae.